We begin with the raw amino-acid sequence, 159 residues long: LOB domain-containing protein 25 (159 aa).

The LOB domain occupies 38–139 (SPCAACKFLR…RELEETNADL (102 aa)).

Belongs to the LOB domain-containing protein family. As to expression, expressed in young shoots, roots, stems, leaves and flowers.

The sequence is that of LOB domain-containing protein 25 (LBD25) from Arabidopsis thaliana (Mouse-ear cress).